Consider the following 219-residue polypeptide: MGLFRSPRQNLPTAADALPGRAEPLPVGNIHAVNGHPLKPPFPAGLETAVFGMGCFWGVERKFWQVPGVYSTAAGYAGGPTPNPTYEEVCTGRTGHAEVVLVVYDPATVSYAELLKVFWENHDPTQGMRQGNDVGTQYRSAIYATTPEQLRLAEASRDSYASRLKAQGYGAVTTEIREAPAFYYAEDYHQQYLHKKPWGYCGLGGTGVSCPLPTGVAAD.

A disordered region spans residues 1–20; the sequence is MGLFRSPRQNLPTAADALPG. Cysteine 55 is an active-site residue.

This sequence belongs to the MsrA Met sulfoxide reductase family.

It catalyses the reaction L-methionyl-[protein] + [thioredoxin]-disulfide + H2O = L-methionyl-(S)-S-oxide-[protein] + [thioredoxin]-dithiol. It carries out the reaction [thioredoxin]-disulfide + L-methionine + H2O = L-methionine (S)-S-oxide + [thioredoxin]-dithiol. Functionally, has an important function as a repair enzyme for proteins that have been inactivated by oxidation. Catalyzes the reversible oxidation-reduction of methionine sulfoxide in proteins to methionine. This is Peptide methionine sulfoxide reductase MsrA from Rhodospirillum centenum (strain ATCC 51521 / SW).